Reading from the N-terminus, the 687-residue chain is Histone deacetylase clr3 (687 aa).

Residues 55-385 (KKSGLCYDPR…ALAVAQSLLG (331 aa)) are histone deacetylase. Histidine 195 is an active-site residue.

This sequence belongs to the histone deacetylase family. HD type 2 subfamily. As to quaternary structure, interacts with ccq1, clr1, clr2 and mit1.

Its subcellular location is the nucleus. It localises to the chromosome. It is found in the centromere. The protein resides in the telomere. It carries out the reaction N(6)-acetyl-L-lysyl-[histone] + H2O = L-lysyl-[histone] + acetate. Its function is as follows. Responsible for the deacetylation of lysine residues on the N-terminal part of the core histones (H2A, H2B, H3 and H4). Histone deacetylation gives a tag for epigenetic repression and plays an important role in transcriptional regulation, cell cycle progression and developmental events. Histone deacetylases act via the formation of large multiprotein complexes. Required for proper positioning of nucleosomes at heterochromatic loci and for transcriptional gene silencing (TGS) function of the Snf2/Hdac-containing repressor complex (SHREC). This Schizosaccharomyces pombe (strain 972 / ATCC 24843) (Fission yeast) protein is Histone deacetylase clr3 (clr3).